We begin with the raw amino-acid sequence, 105 residues long: MKTKTIFQLVALFAIGATAAPTGCGETRDIQAEAVKPRDVAASQTLHLDARSDIIKGGSSNLERREIWYWCRIGNCNAAFKSLAARCRHEKTAVHIAPESDSDSE.

Residues 1–19 (MKTKTIFQLVALFAIGATA) form the signal peptide. The segment at 69-95 (YWCRIGNCNAAFKSLAARCRHEKTAVH) adopts a C2H2-type zinc-finger fold.

Its subcellular location is the secreted. The protein localises to the host nucleus. Functionally, probable secreted effector that translocates into the nuclei of host cells to reprogram the expression of targeted genes by binding on effector binding elements in rice. The protein is Host transcription reprogramming factor 7 of Pyricularia oryzae (strain 70-15 / ATCC MYA-4617 / FGSC 8958) (Rice blast fungus).